The primary structure comprises 178 residues: MGSTFFGRPNVVGSSPPSSSPTSSSSSPATRRGKKNGSEKPKQPQRGLGVAQLEKIRLHGEMSCNSFNSYNPSLYPQEDVRMQGGYSSIPSQSSAPYGFYPNMMMGVHRDQYDRATMSWNPSYGILESQHSLEPNITRHFLNEDPSSTTRRSKSLGSGIQHSGSSENQEVDLELRLSL.

Disordered regions lie at residues 1-48 (MGST…QRGL) and 139-178 (HFLNEDPSSTTRRSKSLGSGIQHSGSSENQEVDLELRLSL). The span at 14 to 28 (SSPPSSSPTSSSSSP) shows a compositional bias: low complexity. Positions 46–54 (RGLGVAQLE) match the SPL motif. Polar residues predominate over residues 144 to 167 (DPSSTTRRSKSLGSGIQHSGSSEN). Residues 170–176 (VDLELRL) carry the EAR motif.

Interacts with SPL and SPEAR2. In terms of tissue distribution, not detected in leaves.

Functionally, adapter-like transcriptional repressor recruiting TPL/TPR corepressors to inhibit TCP transcription factors. This Arabidopsis thaliana (Mouse-ear cress) protein is Protein SPEAR1.